The sequence spans 840 residues: Urease (840 aa).

Residues 402–840 (GAIDCHVHYI…VPLSRNYFLF (439 aa)) form the Urease domain. Ni(2+) contacts are provided by His407, His409, and Lys490. Lys490 carries the post-translational modification N6-carboxylysine. Residue His492 participates in substrate binding. Positions 519 and 545 each coordinate Ni(2+). The Proton donor role is filled by His593. Asp633 provides a ligand contact to Ni(2+).

It in the C-terminal section; belongs to the metallo-dependent hydrolases superfamily. Urease alpha subunit family. As to quaternary structure, homohexamer. Other oligomeric forms may exist depending on pH and presence of salts. Requires Ni cation as cofactor. Carboxylation allows a single lysine to coordinate two nickel ions.

It carries out the reaction urea + 2 H2O + H(+) = hydrogencarbonate + 2 NH4(+). It participates in nitrogen metabolism; urea degradation; CO(2) and NH(3) from urea (urease route): step 1/1. P-hydroxymercuribenzoate irreversibly abolishes ureolytic activity, but does not inhibit the ability to activate platelets. Also inhibited by acetohydroxamic acid (AHA), a chelator of Ni2+ and Zn2+ ions. Functionally, urea hydrolase involved in nitrogen recycling from ureide, purine, and arginine catabolism. Is known to be highly toxic and lethal when given by intravenous route, producing convulsions and other signs of central nervous system intoxication associated with the high levels of ammonia formed in the blood of mice and rabbits. Is neurotoxic in mammals, when directly injected into hippocampus. It may induce seizures by acting at a neuronal network level, thereby disturbing electroencephalographic rhythms and causing metabolic alterations in key areas related to epileptogenesis and to neurogenic pulmonary edema. It increases calcium influx and neuronal firing rate in the hippocampus. Is able to insert itself into lipid bilayers, altering physicochemical properties of artificial membranes, and forming cation-selective ion channels. In vitro, has the ability to induce platelet aggregation, platelet granules secretion and release of ATP. In contrast to canatoxin, another urease from C.ensiformis, is not lethal to mice when intraperitoneally injected. The protein is Urease of Canavalia ensiformis (Jack bean).